Reading from the N-terminus, the 308-residue chain is MDALKSAGRALIRSPSLAKQSWGGGGRHRKLPENWTDTRETLLEGMLFSLKYLGMTLVEQPKGEELSAAAIKRIVATAKASGKKLQKVTLKVSPRGIILTDNLTNQLIENVSIYRISYCTADKMHDKVFAYIAQSQHNQSLECHAFLCTKRKMAQAVTLTVAQAFKVAFEFWQVSKEEKEKRDKASQEGGDVLGARQDCTPSLKSLVATGNLLDLEETAKAPLSTVSANTTNMDEVPRPQALSGSSVVWELDDGLDEAFSRLAQSRTNPQVLDTGLTAQDMHYAQCLSPVDWDKPDSSGTEQDDLFSF.

N-acetylmethionine is present on Met1. A phosphoserine mark is found at Ser14, Ser186, and Ser202. The 155-residue stretch at 42–196 folds into the PID domain; the sequence is LLEGMLFSLK…QEGGDVLGAR (155 aa). Positions 212-216 match the Clathrin box motif; it reads LLDLE. The segment at 249 to 276 is AP-2 complex binding; the sequence is WELDDGLDEAFSRLAQSRTNPQVLDTGL. The short motif at 257–266 is the [DE]-X(1,2)-F-X-X-[FL]-X-X-X-R motif element; sequence EAFSRLAQSR.

Interacts (via PID domain) with LDLR (via NPXY motif). Binds to soluble clathrin trimers. Interacts with AP2B1; the interaction mediates the association with the AP-2 complex. Interacts with VLDLR. Interacts with LRP2. As to expression, expressed at high levels in the kidney, liver, and placenta, with lower levels detectable in brain, heart, muscle, colon, spleen, intestine, lung, and leukocytes.

The protein resides in the cytoplasm. Its function is as follows. Adapter protein (clathrin-associated sorting protein (CLASP)) required for efficient endocytosis of the LDL receptor (LDLR) in polarized cells such as hepatocytes and lymphocytes, but not in non-polarized cells (fibroblasts). May be required for LDL binding and internalization but not for receptor clustering in coated pits. May facilitate the endocytosis of LDLR and LDLR-LDL complexes from coated pits by stabilizing the interaction between the receptor and the structural components of the pits. May also be involved in the internalization of other LDLR family members. Binds to phosphoinositides, which regulate clathrin bud assembly at the cell surface. Required for trafficking of LRP2 to the endocytic recycling compartment which is necessary for LRP2 proteolysis, releasing a tail fragment which translocates to the nucleus and mediates transcriptional repression. The polypeptide is Low density lipoprotein receptor adapter protein 1 (Homo sapiens (Human)).